The primary structure comprises 441 residues: RUN domain-containing protein 3A (441 aa).

Positions 1–293 (MEASFVQTTM…LQLQLEEAAA (293 aa)) are interaction with RAP2A. In terms of domain architecture, RUN spans 52–184 (DDSSEEFVNF…IDFSFCLKGE (133 aa)). Thr210 bears the Phosphothreonine mark. Residues 211–234 (DEEERHSAESSTSEDNSPEHPYLP) are disordered. Ser227 is subject to Phosphoserine. Positions 262–317 (YLEELVRLRESQLKDLEAENRRLQLQLEEAAAQNQREKRELEGVILELQEQLTGLI) form a coiled coil. The span at 367-379 (PLSAEASLSSDSQ) shows a compositional bias: polar residues. Positions 367 to 399 (PLSAEASLSSDSQRLGEGKRDEEPWGPIGKDPT) are disordered. Basic and acidic residues predominate over residues 380-389 (RLGEGKRDEE). 2 positions are modified to phosphoserine: Ser411 and Ser414.

Belongs to the RUNDC3 family. As to quaternary structure, interacts with the GTP-bound form of RAP2A.

Its function is as follows. May act as an effector of RAP2A in neuronal cells. In Bos taurus (Bovine), this protein is RUN domain-containing protein 3A (RUNDC3A).